The following is a 101-amino-acid chain: Small ribosomal subunit protein uS14 (101 aa).

Belongs to the universal ribosomal protein uS14 family. Part of the 30S ribosomal subunit. Contacts proteins S3 and S10.

In terms of biological role, binds 16S rRNA, required for the assembly of 30S particles and may also be responsible for determining the conformation of the 16S rRNA at the A site. This Orientia tsutsugamushi (strain Boryong) (Rickettsia tsutsugamushi) protein is Small ribosomal subunit protein uS14.